The chain runs to 1064 residues: Lysine-specific demethylase 4A (1064 aa).

N-acetylalanine is present on A2. Residues 14–56 (IMTFYPTMEEFRNFSRYIAYIESQGAHRAGLAKVVPPKEWKPR) form the JmjN domain. Y132 contacts 2-oxoglutarate. One can recognise a JmjC domain in the interval 142–308 (EKHVDEWNIG…YGKQAVLCSC (167 aa)). 2 residues coordinate Fe cation: H188 and E190. 2-oxoglutarate-binding residues include N198 and K206. Residues C234 and H240 each coordinate Zn(2+). K241 is a 2-oxoglutarate binding site. Fe cation is bound at residue H276. The Zn(2+) site is built by C306 and C308. Disordered regions lie at residues 358-384 (ELPPRAGNEEECPEDDMEGVEDGEEGD), 501-537 (FSGSKKKSSSSLGSGSSRDSVSSDSETSEPLSCRAQG), and 616-642 (SDDETSEQLTPEEEAEETEAWAKPLSQ). The span at 366–382 (EEECPEDDMEGVEDGEE) shows a compositional bias: acidic residues. Residues 509-532 (SSSLGSGSSRDSVSSDSETSEPLS) are compositionally biased toward low complexity. S523 is modified (phosphoserine). An interaction with NCOR1 region spans residues 597–638 (RQPLSKLPRHHPLVLQECVSDDETSEQLTPEEEAEETEAWAK). Residues 616–634 (SDDETSEQLTPEEEAEETE) are compositionally biased toward acidic residues. The segment at 709–767 (MCFTSTGCGTDINLSTPYLEEDGTSILVSCKKCSVRVHASCYGVPPAKASEDWMCSRCS) adopts a PHD-type 1 zinc-finger fold. The C2HC pre-PHD-type zinc-finger motif lies at 772–805 (EEDCCLCSLRGGALQRANDDRWVHVSCAVAILEA). The PHD-type 2 zinc finger occupies 828–885 (LKCIFCKKRRKRTAGCCVQCSHGRCPTAFHVSCAQAAGVMMQPDDWPFVVFITCFRHK). Tudor domains are found at residues 897-954 (QSIT…CLQF) and 955-1011 (GPPA…EELP).

The protein belongs to the JHDM3 histone demethylase family. In terms of assembly, interacts with histone deacetylase proteins HDAC1, HDAC2 and HDAC3. Interacts with RB and NCOR1. Interacts with VRK1. Fe(2+) is required as a cofactor. In terms of processing, ubiquitinated by RNF8 and RNF168, leading to its degradation. Degradation promotes accessibility of H4K20me2 mark for DNA repair protein TP53BP1, which is then recruited. Also ubiquitinated by the SCF(FBXO22) complex; leading to proteasomal degradation.

It localises to the nucleus. The enzyme catalyses N(6),N(6),N(6)-trimethyl-L-lysyl(9)-[histone H3] + 2 2-oxoglutarate + 2 O2 = N(6)-methyl-L-lysyl(9)-[histone H3] + 2 formaldehyde + 2 succinate + 2 CO2. It carries out the reaction N(6),N(6),N(6)-trimethyl-L-lysyl(36)-[histone H3] + 2 2-oxoglutarate + 2 O2 = N(6)-methyl-L-lysyl(36)-[histone H3] + 2 formaldehyde + 2 succinate + 2 CO2. Histone demethylase that specifically demethylates 'Lys-9' and 'Lys-36' residues of histone H3, thereby playing a central role in histone code. Does not demethylate histone H3 'Lys-4', H3 'Lys-27' nor H4 'Lys-20'. Demethylates trimethylated H3 'Lys-9' and H3 'Lys-36' residue, while it has no activity on mono- and dimethylated residues. Demethylation of Lys residue generates formaldehyde and succinate. Participates in transcriptional repression of ASCL2 and E2F-responsive promoters via the recruitment of histone deacetylases and NCOR1, respectively. The protein is Lysine-specific demethylase 4A (KDM4A) of Pongo abelii (Sumatran orangutan).